The sequence spans 614 residues: V-type proton ATPase catalytic subunit A (614 aa).

247–254 (GAFGCGKT) is a binding site for ATP.

Belongs to the ATPase alpha/beta chains family. V-ATPase is a heteromultimeric enzyme made up of two complexes: the ATP-hydrolytic V1 complex and the proton translocation V0 complex. The V1 complex consists of three catalytic AB heterodimers that form a heterohexamer, three peripheral stalks each consisting of EG heterodimers, one central rotor including subunits D and F, and the regulatory subunits C and H. The proton translocation complex V0 consists of the proton transport subunit a, a ring of proteolipid subunits c9c'', rotary subunit d, subunits e and f, and the accessory subunits VhaAC45 and ATP6AP2.

It carries out the reaction ATP + H2O + 4 H(+)(in) = ADP + phosphate + 5 H(+)(out). Its activity is regulated as follows. ATP hydrolysis occurs at the interface between the nucleotide-binding domains of subunits A and B. ATP hydrolysis triggers a conformational change in the subunits D and F, which induces a shift of subunit d. The c-ring is subsequently rotated and results in a continuous proton translocation across the membrane. In terms of biological role, catalytic subunit of the V1 complex of vacuolar(H+)-ATPase (V-ATPase), a multisubunit enzyme composed of a peripheral complex (V1) that hydrolyzes ATP and a membrane integral complex (V0) that translocates protons. V-ATPase is responsible for acidifying and maintaining the pH of intracellular compartments and in some cell types, is targeted to the plasma membrane, where it is responsible for acidifying the extracellular environment. The polypeptide is V-type proton ATPase catalytic subunit A (Anopheles gambiae (African malaria mosquito)).